Reading from the N-terminus, the 156-residue chain is Small ribosomal subunit protein uS7 (156 aa).

It belongs to the universal ribosomal protein uS7 family. In terms of assembly, part of the 30S ribosomal subunit. Contacts proteins S9 and S11.

Its function is as follows. One of the primary rRNA binding proteins, it binds directly to 16S rRNA where it nucleates assembly of the head domain of the 30S subunit. Is located at the subunit interface close to the decoding center, probably blocks exit of the E-site tRNA. This is Small ribosomal subunit protein uS7 from Synechocystis sp. (strain ATCC 27184 / PCC 6803 / Kazusa).